The chain runs to 1252 residues: DNA-directed RNA polymerase subunit beta (1252 aa).

Belongs to the RNA polymerase beta chain family. As to quaternary structure, the RNAP catalytic core consists of 2 alpha, 1 beta, 1 beta' and 1 omega subunit. When a sigma factor is associated with the core the holoenzyme is formed, which can initiate transcription.

The enzyme catalyses RNA(n) + a ribonucleoside 5'-triphosphate = RNA(n+1) + diphosphate. DNA-dependent RNA polymerase catalyzes the transcription of DNA into RNA using the four ribonucleoside triphosphates as substrates. This chain is DNA-directed RNA polymerase subunit beta, found in Chlamydia muridarum (strain MoPn / Nigg).